The primary structure comprises 375 residues: MSGDYYETLGVDRNASKEDIKRAYRRLARKYHPDINKEAGAEDRFKEINRAYEVLSEPETRARYDQFGEAGVSGAGAAGFDYGDMGGFADIFETIFSGFGGGVGTGSTRRRTGPTRGDDLRLDLKLDFREAIFGGEKEIRIPHLETCQVCNGSGAKPGTGSRTCSTCNGAGQVRRATRTPFGSFAQVSTCPDCNGAGQVIEQKCDACGGAGRKQETKKLKITIPAGVDNGTRLRVGKEGDAGTRGGTPGDLYVYLFVEPDKEFTREGMNIHSEITISYLQAILGCKLQINTVDGPQELVIPAGTQPNTELMLEDHGVPKLGNSAIRGDHLINVKIAIPTRINNEERELLEKLAHIKGQSHGKGGLEGFLGSLFHK.

A J domain is found at 4-68; it reads DYYETLGVDR…ETRARYDQFG (65 aa). The CR-type zinc finger occupies 134-216; that stretch reads GGEKEIRIPH…CGGAGRKQET (83 aa). C147, C150, C164, C167, C190, C193, C204, and C207 together coordinate Zn(2+). CXXCXGXG motif repeat units lie at residues 147 to 154, 164 to 171, 190 to 197, and 204 to 211; these read CQVCNGSG, CSTCNGAG, CPDCNGAG, and CDACGGAG.

This sequence belongs to the DnaJ family. Homodimer. Zn(2+) serves as cofactor.

Its subcellular location is the cytoplasm. In terms of biological role, participates actively in the response to hyperosmotic and heat shock by preventing the aggregation of stress-denatured proteins and by disaggregating proteins, also in an autonomous, DnaK-independent fashion. Unfolded proteins bind initially to DnaJ; upon interaction with the DnaJ-bound protein, DnaK hydrolyzes its bound ATP, resulting in the formation of a stable complex. GrpE releases ADP from DnaK; ATP binding to DnaK triggers the release of the substrate protein, thus completing the reaction cycle. Several rounds of ATP-dependent interactions between DnaJ, DnaK and GrpE are required for fully efficient folding. Also involved, together with DnaK and GrpE, in the DNA replication of plasmids through activation of initiation proteins. This chain is Chaperone protein DnaJ, found in Rippkaea orientalis (strain PCC 8801 / RF-1) (Cyanothece sp. (strain PCC 8801)).